Consider the following 957-residue polypeptide: Collagen alpha-1(I) chain (957 aa).

Residues 1-957 (GPMGPSGPRG…PGPPGPPGPP (957 aa)) are disordered. The segment covering 23–33 (FPGEPGASGPM) has biased composition (low complexity). Over residues 45 to 59 (NGDDGEAGKPGRPGE) the composition is skewed to basic and acidic residues. Serine 87 bears the Phosphoserine mark. Composition is skewed to low complexity over residues 95 to 113 (DAGP…PRGI) and 125 to 138 (PAGA…TGAA). Positions 140 to 152 (PPGPTGPAGPPGF) are enriched in pro residues. Low complexity-rich tracts occupy residues 186 to 210 (AGAA…RGPS) and 219 to 228 (SGPKGNSGEP). The segment covering 277-286 (GERGGPGSRG) has biased composition (gly residues). Composition is skewed to low complexity over residues 330–356 (KGIT…QDGR), 365–384 (ARGQ…AGEP), 426–453 (QGPA…PGEQ), 488–516 (PRGA…QGAP), 576–590 (AGPS…ARGA), 603–618 (AGFA…PGAK), 649–665 (SAGP…AGRV), and 707–731 (AGEK…QGIA). The residue at position 579 (serine 579) is a Phosphoserine. 2 stretches are compositionally biased toward pro residues: residues 772-782 (PPGPMGPPGIA) and 818-833 (AGPP…PGPV). Residues 854–868 (IGPVGARGAAGPQGP) show a composition bias toward low complexity. Basic and acidic residues predominate over residues 869–883 (RGDKGETGEQGDRGI). Residues 902–935 (PGEQGPSGASGPAGPRGPPGSAGSPGKDGINGIP) show a composition bias toward low complexity. Over residues 937–957 (PIGPPGPRPGPPGPPGPPGPP) the composition is skewed to pro residues.

Belongs to the fibrillar collagen family. In terms of assembly, trimers of one alpha 2(I) and two alpha 1(I) chains. In terms of processing, prolines at the third position of the tripeptide repeating unit (G-X-Y) are hydroxylated in some or all of the chains. Forms the fibrils of tendon, ligaments and bones. In bones, the fibrils are mineralized with calcium hydroxyapatite.

The protein localises to the secreted. The protein resides in the extracellular space. It is found in the extracellular matrix. In terms of biological role, type I collagen is a member of group I collagen (fibrillar forming collagen). The chain is Collagen alpha-1(I) chain from Hippopotamus amphibius (Hippopotamus).